The primary structure comprises 459 residues: Bifunctional protein GlmU (459 aa).

Residues 1 to 229 (MSNFAIXLAA…FDESLGVNDR (229 aa)) form a pyrophosphorylase region. UDP-N-acetyl-alpha-D-glucosamine-binding positions include 8–11 (LAAG), Lys-22, Gln-72, and 77–78 (GT). Asp-102 lines the Mg(2+) pocket. Positions 139, 154, 169, and 227 each coordinate UDP-N-acetyl-alpha-D-glucosamine. Mg(2+) is bound at residue Asn-227. The interval 230–250 (VALATAESVMRRRINHKHMVN) is linker. The tract at residues 251-459 (GVSFVNPEAT…TRLPHHPKNQ (209 aa)) is N-acetyltransferase. Residues Arg-332 and Lys-350 each contribute to the UDP-N-acetyl-alpha-D-glucosamine site. The active-site Proton acceptor is the His-362. Residues Tyr-365 and Asn-376 each contribute to the UDP-N-acetyl-alpha-D-glucosamine site. Acetyl-CoA is bound by residues Ala-379, 385–386 (NY), Ser-404, Ala-422, and Arg-439.

It in the N-terminal section; belongs to the N-acetylglucosamine-1-phosphate uridyltransferase family. This sequence in the C-terminal section; belongs to the transferase hexapeptide repeat family. As to quaternary structure, homotrimer. Mg(2+) is required as a cofactor.

The protein resides in the cytoplasm. It catalyses the reaction alpha-D-glucosamine 1-phosphate + acetyl-CoA = N-acetyl-alpha-D-glucosamine 1-phosphate + CoA + H(+). It carries out the reaction N-acetyl-alpha-D-glucosamine 1-phosphate + UTP + H(+) = UDP-N-acetyl-alpha-D-glucosamine + diphosphate. It functions in the pathway nucleotide-sugar biosynthesis; UDP-N-acetyl-alpha-D-glucosamine biosynthesis; N-acetyl-alpha-D-glucosamine 1-phosphate from alpha-D-glucosamine 6-phosphate (route II): step 2/2. The protein operates within nucleotide-sugar biosynthesis; UDP-N-acetyl-alpha-D-glucosamine biosynthesis; UDP-N-acetyl-alpha-D-glucosamine from N-acetyl-alpha-D-glucosamine 1-phosphate: step 1/1. Its pathway is bacterial outer membrane biogenesis; LPS lipid A biosynthesis. Catalyzes the last two sequential reactions in the de novo biosynthetic pathway for UDP-N-acetylglucosamine (UDP-GlcNAc). The C-terminal domain catalyzes the transfer of acetyl group from acetyl coenzyme A to glucosamine-1-phosphate (GlcN-1-P) to produce N-acetylglucosamine-1-phosphate (GlcNAc-1-P), which is converted into UDP-GlcNAc by the transfer of uridine 5-monophosphate (from uridine 5-triphosphate), a reaction catalyzed by the N-terminal domain. The polypeptide is Bifunctional protein GlmU (Streptococcus pneumoniae serotype 19F (strain G54)).